Consider the following 634-residue polypeptide: DNA gyrase subunit B (634 aa).

The region spanning 416–530 (REIYIVEGDS…NGYIYIAMPP (115 aa)) is the Toprim domain. Positions 422, 495, and 497 each coordinate Mg(2+).

Belongs to the type II topoisomerase GyrB family. Heterotetramer, composed of two GyrA and two GyrB chains. In the heterotetramer, GyrA contains the active site tyrosine that forms a transient covalent intermediate with DNA, while GyrB binds cofactors and catalyzes ATP hydrolysis. The cofactor is Mg(2+). Mn(2+) serves as cofactor. It depends on Ca(2+) as a cofactor.

Its subcellular location is the cytoplasm. The enzyme catalyses ATP-dependent breakage, passage and rejoining of double-stranded DNA.. Functionally, a type II topoisomerase that negatively supercoils closed circular double-stranded (ds) DNA in an ATP-dependent manner to modulate DNA topology and maintain chromosomes in an underwound state. Negative supercoiling favors strand separation, and DNA replication, transcription, recombination and repair, all of which involve strand separation. Also able to catalyze the interconversion of other topological isomers of dsDNA rings, including catenanes and knotted rings. Type II topoisomerases break and join 2 DNA strands simultaneously in an ATP-dependent manner. The protein is DNA gyrase subunit B of Borreliella burgdorferi (strain ATCC 35210 / DSM 4680 / CIP 102532 / B31) (Borrelia burgdorferi).